The sequence spans 457 residues: PDZ and LIM domain protein 7 (457 aa).

One can recognise a PDZ domain in the interval 1-85 (MDSFKVVLEG…RLSLGLSRAQ (85 aa)). A Phosphoserine modification is found at serine 78. 2 disordered regions span residues 82–166 (SRAQ…QSRS) and 186–226 (FMKK…PWAV). The residue at position 96 (threonine 96) is a Phosphothreonine. The residue at position 103 (arginine 103) is an Asymmetric dimethylarginine. Serine 111 is modified (phosphoserine). Polar residues predominate over residues 126-135 (DSTLRQNGQL). A compositionally biased stretch (basic and acidic residues) spans 144 to 157 (SKQRLMEDTEDWRP). Phosphoserine is present on serine 247. LIM zinc-binding domains follow at residues 280 to 338 (PVCH…VRYA), 339 to 398 (PNCA…MFGT), and 399 to 457 (KCRG…FSHV).

As to quaternary structure, specifically binds via its LIM zinc-binding 3 domain (LIM 3) domain to endocytic codes of INSR, but not with those of IGF1R, LDLR, TFRC, or EGFR. Interacts with various PKC isoforms through the LIM zinc-binding domains. Binds to RET in a phosphorylation-independent manner via its LIM zinc-binding domain 2 (LIM 2). Probably part of a complex with SHC and the RET dimer. Interacts with TPM2, TBX4 and TBX5.

The protein resides in the cytoplasm. Its subcellular location is the cytoskeleton. Its function is as follows. May function as a scaffold on which the coordinated assembly of proteins can occur. May play a role as an adapter that, via its PDZ domain, localizes LIM-binding proteins to actin filaments of both skeletal muscle and nonmuscle tissues. Involved in both of the two fundamental mechanisms of bone formation, direct bone formation (e.g. embryonic flat bones mandible and cranium), and endochondral bone formation (e.g. embryonic long bone development). Plays a role during fracture repair. Involved in BMP6 signaling pathway. In Mus musculus (Mouse), this protein is PDZ and LIM domain protein 7 (Pdlim7).